Consider the following 523-residue polypeptide: Effector protein hopAB1 (523 aa).

Disordered regions lie at residues 1–94 (MPGI…EAQQ), 165–223 (VRQQ…QGLD), and 299–320 (RQTTTNSPELPPLASSAESGRR). Over residues 18-31 (TDGEPVTEREHDSS) the composition is skewed to basic and acidic residues. Low complexity predominate over residues 181-194 (SSSGSSQRSLIGRS).

The protein belongs to the HopAB family.

It localises to the secreted. Its function is as follows. Effector protein that plays different roles depending on the species and plant cultivars that interact with the pathogen. Acts as a virulence determinant by enhancing the development of disease symptoms and bacterial growth. Acts as an avirulence factor by eliciting hypersensitive response (HR) and plant resistance. This Pseudomonas savastanoi pv. glycinea (Pseudomonas syringae pv. glycinea) protein is Effector protein hopAB1 (hopAB1).